Reading from the N-terminus, the 533-residue chain is Beta-xylosidase (533 aa).

The active-site Proton acceptor is Asp-14. Glu-186 functions as the Proton donor in the catalytic mechanism.

The protein belongs to the glycosyl hydrolase 43 family. In terms of assembly, homodimer.

It is found in the cell membrane. It carries out the reaction Hydrolysis of (1-&gt;4)-beta-D-xylans, to remove successive D-xylose residues from the non-reducing termini.. This Bacillus subtilis (strain 168) protein is Beta-xylosidase (xynB).